Reading from the N-terminus, the 695-residue chain is Follicle-stimulating hormone receptor (695 aa).

The signal sequence occupies residues 1–17; sequence MALLLVSLLAFMSLGSG. 2 disulfides stabilise this stretch: cysteine 18-cysteine 25 and cysteine 23-cysteine 32. Positions 18 to 46 constitute an LRRNT domain; it reads CHHRLCHCSNRVFLCQESKVTEIPSDLPR. At 18 to 366 the chain is on the extracellular side; the sequence is CHHRLCHCSN…EDIMGYNILR (349 aa). LRR repeat units follow at residues 49 to 72, 73 to 97, 98 to 118, 119 to 143, 144 to 169, 170 to 192, 193 to 216, 217 to 240, and 241 to 259; these read VELRFVLTKLRVIPKGAFSGFGDL, EKIEISQNDALEVIEADVFSNLPNL, HEIRIEKANNLLYINPEAFQN, LPNLRYLLISNTGIRHLPAVHKIQS, LQKVLLDIQDNINIHTVERNSFLGLS, SESVILRLNKNGIQEIQNCAFNG, TQLDDLNLSDNDNLEELPNGVFQG, ASGPVILDISRTRINSLPSHGLEN, and LKKLRARSTYNLKKLPSLE. Residues asparagine 191 and asparagine 199 are each glycosylated (N-linked (GlcNAc...) asparagine). Disulfide bonds link cysteine 275–cysteine 346, cysteine 276–cysteine 292, cysteine 276–cysteine 356, and cysteine 292–cysteine 338. Asparagine 293 carries an N-linked (GlcNAc...) asparagine glycan. Tyrosine 335 is subject to Sulfotyrosine. A helical membrane pass occupies residues 367–387; it reads VLIWFISILAITGNVAVLVVL. Over 388-398 the chain is Cytoplasmic; that stretch reads TTSQYKLTVPR. Residues 399-421 form a helical membrane-spanning segment; sequence FLMCNLAFADLCIGIYLLLIASV. Residues 422–443 lie on the Extracellular side of the membrane; sequence DVHTRTLYHNYAIDWQTGAGCA. Cysteine 442 and cysteine 517 are disulfide-bonded. Residues 444-465 traverse the membrane as a helical segment; it reads DCWLFTVFASELSVYTLTAITL. Residues 466–485 are Cytoplasmic-facing; that stretch reads ERWHTITHAMQLDCKVQLRH. A helical membrane pass occupies residues 486–508; the sequence is AASIMVIGWIFSSAAALFPIFGV. Over 509 to 528 the chain is Extracellular; sequence SSYMKVSICLPMDIDSPLSQ. Residues 529-550 traverse the membrane as a helical segment; the sequence is LYVMFLLVLNVLAFVVICGCYL. The Cytoplasmic segment spans residues 551 to 573; it reads HIYLTVRNPNIVSSASDTRIAKR. The chain crosses the membrane as a helical span at residues 574–597; that stretch reads MATLIFTDFLCMAPISFFAISASL. The Extracellular portion of the chain corresponds to 598–608; that stretch reads KVPLITVSKAK. Residues 609–630 traverse the membrane as a helical segment; the sequence is ILLVLFYPINSCANPFLYAIFT. Residues 631–695 are Cytoplasmic-facing; that stretch reads KNFRRDLFIL…LAPLNHLAQN (65 aa). A disordered region spans residues 658–677; that stretch reads TSSTAHNSHPRNGHSSSVSR.

Belongs to the G-protein coupled receptor 1 family. FSH/LSH/TSH subfamily. Homotrimer. Functions as a homotrimer binding the FSH hormone heterodimer composed of CGA and FSHB. Interacts with ARRB2. Interacts with APPL2; interaction is independent of follicle stimulating hormone stimulation. N-glycosylated; indirectly required for FSH-binding, possibly via a conformational change that allows high affinity binding of hormone. Post-translationally, sulfated.

The protein resides in the cell membrane. In terms of biological role, g protein-coupled receptor for follitropin, the follicle-stimulating hormone. Through cAMP production activates the downstream PI3K-AKT and ERK1/ERK2 signaling pathways. The chain is Follicle-stimulating hormone receptor (FSHR) from Cavia porcellus (Guinea pig).